The following is a 368-amino-acid chain: MMMSNRVLVAMSGGVDSSVAALMLKEQGYEVIGAHMRIWYREEDEELYEQNVKGCCSLAAVHDAKRVADKIGIPFYVLNFKEPFYDWVVKNFIDEYLQGRTPNPCIACNRFIKWEEFLKRAMALECDYIATGHYSKIVYDNLKNRYLLYRGKDKTKDQSYMLSQLTQEQLARTLFPLGDYYKEDVRNIAEQNELGVADKPDSQEICFVPNNDYGEFLQSVVPEHINPGPILDAQGNKLGEHKGIAFYTIGQRRGLGISLGRPVYVIDIDADNNALIVGDKEELYSDGLIAEEINLIPYEQIENSIDIECKIRYNSRNVSSTLQPYGNDQLLVKFNQPVEAVTPGQGVTFYQDDLVIGGGTILKATTKK.

Residues 10 to 17 (AMSGGVDS) and Met36 contribute to the ATP site. Cys108 serves as the catalytic Nucleophile. Residues Cys108 and Cys206 are joined by a disulfide bond. Gly132 serves as a coordination point for ATP. The interaction with tRNA stretch occupies residues 156-158 (KDQ). Cys206 serves as the catalytic Cysteine persulfide intermediate. An interaction with tRNA region spans residues 312-313 (RY).

Belongs to the MnmA/TRMU family.

It is found in the cytoplasm. The catalysed reaction is S-sulfanyl-L-cysteinyl-[protein] + uridine(34) in tRNA + AH2 + ATP = 2-thiouridine(34) in tRNA + L-cysteinyl-[protein] + A + AMP + diphosphate + H(+). Functionally, catalyzes the 2-thiolation of uridine at the wobble position (U34) of tRNA, leading to the formation of s(2)U34. This chain is tRNA-specific 2-thiouridylase MnmA, found in Natranaerobius thermophilus (strain ATCC BAA-1301 / DSM 18059 / JW/NM-WN-LF).